The following is a 367-amino-acid chain: MSNKKVLMLMSGGVDSSVAAYLLKEQNYHVIGLHFKTVSDVVFSLIPEKKKVCCSPSDTQDALKIADKLDLDDFQIVDIKKEFKEKIIDYFIKTYKEGKTPNPCMLCNRFFKFGKALEIAHSYGADWVSSGHYLIKEYSNKYSTYIIKKGVDQYKDQSYFLSYIDKNTLPKLHFPLGNMYKVEIRDIANKIGLSVANKPDSQELCFIPDNDYRRFLKENGVTTEEGKVYDLEGNEIGTHTGYMNYTIGQRSGISYYKNANVKLHVYKIFPQKNVLIVAPTEEMYSKELIVQNVNFFVDFKEIEGFCRVRKKSEEKPAVVKKIADHTLKVSFKEPIFAVTPGQFATIYDESGVVLASGVINIKEMGEV.

Residues 9–16 (LMSGGVDS) and Phe-35 each bind ATP. The active-site Nucleophile is the Cys-107. Cys-107 and Cys-205 are disulfide-bonded. ATP is bound at residue Gly-131. An interaction with tRNA region spans residues 155-157 (KDQ). Cys-205 acts as the Cysteine persulfide intermediate in catalysis.

It belongs to the MnmA/TRMU family.

It localises to the cytoplasm. It carries out the reaction S-sulfanyl-L-cysteinyl-[protein] + uridine(34) in tRNA + AH2 + ATP = 2-thiouridine(34) in tRNA + L-cysteinyl-[protein] + A + AMP + diphosphate + H(+). Functionally, catalyzes the 2-thiolation of uridine at the wobble position (U34) of tRNA, leading to the formation of s(2)U34. The protein is tRNA-specific 2-thiouridylase MnmA of Petrotoga mobilis (strain DSM 10674 / SJ95).